The following is a 351-amino-acid chain: sn-glycerol-3-phosphate import ATP-binding protein UgpC (351 aa).

The ABC transporter domain occupies 4–235 (IVLDNVRKSY…PASTFVATFI (232 aa)). Position 37–44 (37–44 (GPSGCGKS)) interacts with ATP.

This sequence belongs to the ABC transporter superfamily. sn-glycerol-3-phosphate importer (TC 3.A.1.1.3) family. As to quaternary structure, the complex is composed of two ATP-binding proteins (UgpC), two transmembrane proteins (UgpA and UgpE) and a solute-binding protein (UgpB).

It is found in the cell inner membrane. The catalysed reaction is sn-glycerol 3-phosphate(out) + ATP + H2O = sn-glycerol 3-phosphate(in) + ADP + phosphate + H(+). In terms of biological role, part of the ABC transporter complex UgpBAEC involved in sn-glycerol-3-phosphate (G3P) import. Responsible for energy coupling to the transport system. The polypeptide is sn-glycerol-3-phosphate import ATP-binding protein UgpC (Brucella abortus (strain 2308)).